Reading from the N-terminus, the 444-residue chain is Phosphoglucosamine mutase (444 aa).

Ser103 (phosphoserine intermediate) is an active-site residue. Positions 103, 241, 243, and 245 each coordinate Mg(2+). Phosphoserine is present on Ser103.

Belongs to the phosphohexose mutase family. Mg(2+) serves as cofactor. In terms of processing, activated by phosphorylation.

It catalyses the reaction alpha-D-glucosamine 1-phosphate = D-glucosamine 6-phosphate. Functionally, catalyzes the conversion of glucosamine-6-phosphate to glucosamine-1-phosphate. In Deinococcus geothermalis (strain DSM 11300 / CIP 105573 / AG-3a), this protein is Phosphoglucosamine mutase.